Consider the following 229-residue polypeptide: Demethylmenaquinone methyltransferase (229 aa).

S-adenosyl-L-methionine contacts are provided by residues threonine 57, aspartate 77, and 101 to 102; that span reads DV.

This sequence belongs to the class I-like SAM-binding methyltransferase superfamily. MenG/UbiE family.

It catalyses the reaction a 2-demethylmenaquinol + S-adenosyl-L-methionine = a menaquinol + S-adenosyl-L-homocysteine + H(+). It participates in quinol/quinone metabolism; menaquinone biosynthesis; menaquinol from 1,4-dihydroxy-2-naphthoate: step 2/2. In terms of biological role, methyltransferase required for the conversion of demethylmenaquinol (DMKH2) to menaquinol (MKH2). The chain is Demethylmenaquinone methyltransferase from Chlamydia trachomatis serovar L2 (strain ATCC VR-902B / DSM 19102 / 434/Bu).